The chain runs to 180 residues: MSKIKQIIIVEGKTDSDKLKRIYGNDLKTIQTKGLSINKKTLEMIKEFNNKTGVIIFTDPDGAGKKIRQTIIDYLDNKVLNAFIKKDDISKTSKKVGIAEASDDAIKKALDNLIIYDKNNVSLSWTDYINNNFYLKSNRIVICKYFNFDNNISSKTLFKWLNWMNVSIDDIKKIIGEYES.

In terms of domain architecture, Toprim spans 5 to 90 (KQIIIVEGKT…NAFIKKDDIS (86 aa)). Positions 11, 59, and 61 each coordinate Mg(2+).

The protein belongs to the ribonuclease M5 family. It depends on Mg(2+) as a cofactor.

It localises to the cytoplasm. The enzyme catalyses Endonucleolytic cleavage of RNA, removing 21 and 42 nucleotides, respectively, from the 5'- and 3'-termini of a 5S-rRNA precursor.. Required for correct processing of both the 5' and 3' ends of 5S rRNA precursor. Cleaves both sides of a double-stranded region yielding mature 5S rRNA in one step. This chain is Ribonuclease M5, found in Mycoplasma capricolum subsp. capricolum (strain California kid / ATCC 27343 / NCTC 10154).